The sequence spans 302 residues: Probable 2-(5''-triphosphoribosyl)-3'-dephosphocoenzyme-A synthase 1 (302 aa).

This sequence belongs to the CitG/MdcB family.

The enzyme catalyses 3'-dephospho-CoA + ATP = 2'-(5''-triphospho-alpha-D-ribosyl)-3'-dephospho-CoA + adenine. The polypeptide is Probable 2-(5''-triphosphoribosyl)-3'-dephosphocoenzyme-A synthase 1 (Salmonella paratyphi A (strain ATCC 9150 / SARB42)).